A 95-amino-acid chain; its full sequence is Small ribosomal subunit protein bS6 (95 aa).

This sequence belongs to the bacterial ribosomal protein bS6 family.

Its function is as follows. Binds together with bS18 to 16S ribosomal RNA. The polypeptide is Small ribosomal subunit protein bS6 (Clostridium perfringens (strain ATCC 13124 / DSM 756 / JCM 1290 / NCIMB 6125 / NCTC 8237 / Type A)).